The sequence spans 418 residues: Tyrosine--tRNA ligase (418 aa).

Y34 provides a ligand contact to L-tyrosine. The 'HIGH' region signature appears at 39 to 48 (PTADSLHLGH). Positions 169 and 173 each coordinate L-tyrosine. The 'KMSKS' region signature appears at 229-233 (KFGKS). K232 provides a ligand contact to ATP. The region spanning 352-418 (LNIVDLLVTA…GKKKYFVLTY (67 aa)) is the S4 RNA-binding domain.

This sequence belongs to the class-I aminoacyl-tRNA synthetase family. TyrS type 1 subfamily. As to quaternary structure, homodimer.

The protein localises to the cytoplasm. The enzyme catalyses tRNA(Tyr) + L-tyrosine + ATP = L-tyrosyl-tRNA(Tyr) + AMP + diphosphate + H(+). Its function is as follows. Catalyzes the attachment of tyrosine to tRNA(Tyr) in a two-step reaction: tyrosine is first activated by ATP to form Tyr-AMP and then transferred to the acceptor end of tRNA(Tyr). This is Tyrosine--tRNA ligase from Streptococcus gordonii (strain Challis / ATCC 35105 / BCRC 15272 / CH1 / DL1 / V288).